The primary structure comprises 446 residues: Thymidine phosphorylase (446 aa).

It belongs to the thymidine/pyrimidine-nucleoside phosphorylase family. As to quaternary structure, homodimer.

It catalyses the reaction thymidine + phosphate = 2-deoxy-alpha-D-ribose 1-phosphate + thymine. It functions in the pathway pyrimidine metabolism; dTMP biosynthesis via salvage pathway; dTMP from thymine: step 1/2. The enzymes which catalyze the reversible phosphorolysis of pyrimidine nucleosides are involved in the degradation of these compounds and in their utilization as carbon and energy sources, or in the rescue of pyrimidine bases for nucleotide synthesis. This chain is Thymidine phosphorylase, found in Psychromonas ingrahamii (strain DSM 17664 / CCUG 51855 / 37).